We begin with the raw amino-acid sequence, 251 residues long: MAQVNKQAIAAAFGRAASQYEQHASLQQHSADALLTLLTGRQFASVLDAGCGPGRMSRYWRERGSEVTALDLSLPMLQQARDRQAAHHYLLADIEAIPHDAEVFDLAWSNLAVQWCGDLRDALSELYRVVRPGGVVAFTTLCQGSLPELRQAWQAVDNRAHANSFLPEEAIDHALRGWRAFRHTQAMTLWFEDALSAMRSLKGIGATHLHEGRESDVLTRARLRQIQLAWPQRQGKYPLTYHLFMGVIERD.

It belongs to the methyltransferase superfamily.

It catalyses the reaction malonyl-[ACP] + S-adenosyl-L-methionine = malonyl-[ACP] methyl ester + S-adenosyl-L-homocysteine. It functions in the pathway cofactor biosynthesis; biotin biosynthesis. In terms of biological role, converts the free carboxyl group of a malonyl-thioester to its methyl ester by transfer of a methyl group from S-adenosyl-L-methionine (SAM). It allows to synthesize pimeloyl-ACP via the fatty acid synthetic pathway. The sequence is that of Malonyl-[acyl-carrier protein] O-methyltransferase from Salmonella typhimurium (strain LT2 / SGSC1412 / ATCC 700720).